Consider the following 496-residue polypeptide: Amidophosphoribosyltransferase (496 aa).

Positions 1–21 are excised as a propeptide; that stretch reads MNQSHSFPTDDPLDGDTLHEE. C22 acts as the Nucleophile in catalysis. A Glutamine amidotransferase type-2 domain is found at 22 to 241; the sequence is CGVFGILGHP…NGEVIICEIQ (220 aa).

This sequence in the C-terminal section; belongs to the purine/pyrimidine phosphoribosyltransferase family.

It catalyses the reaction 5-phospho-beta-D-ribosylamine + L-glutamate + diphosphate = 5-phospho-alpha-D-ribose 1-diphosphate + L-glutamine + H2O. It participates in purine metabolism; IMP biosynthesis via de novo pathway; N(1)-(5-phospho-D-ribosyl)glycinamide from 5-phospho-alpha-D-ribose 1-diphosphate: step 1/2. Catalyzes the formation of phosphoribosylamine from phosphoribosylpyrophosphate (PRPP) and glutamine. This is Amidophosphoribosyltransferase from Rhizobium etli (strain ATCC 51251 / DSM 11541 / JCM 21823 / NBRC 15573 / CFN 42).